Reading from the N-terminus, the 362-residue chain is Alternative oxidase, mitochondrial (362 aa).

A mitochondrion-targeting transit peptide spans 1 to 64; that stretch reads MNTPKVNILH…RNFSTTSVTR (64 aa). A helical membrane pass occupies residues 156–176; that stretch reads LVRFIFLESIAGVPGMVAGML. Positions 163, 202, and 205 each coordinate Fe cation. Residues 222 to 242 form a helical membrane-spanning segment; sequence LILGAQGVFFNAMFLSYLISP. The Fe cation site is built by Glu253, Glu310, and His313.

This sequence belongs to the alternative oxidase family. As to quaternary structure, homodimer; disulfide-linked. Fe cation serves as cofactor.

Its subcellular location is the mitochondrion inner membrane. Its function is as follows. Catalyzes cyanide-resistant oxygen consumption. May increase respiration when the cytochrome respiratory pathway is restricted, or in response to low temperatures. The sequence is that of Alternative oxidase, mitochondrial (aod-1) from Neurospora crassa (strain ATCC 24698 / 74-OR23-1A / CBS 708.71 / DSM 1257 / FGSC 987).